A 675-amino-acid chain; its full sequence is DNA ligase (675 aa).

NAD(+)-binding positions include 34 to 38, 83 to 84, and Glu116; these read DAEYD and SL. The N6-AMP-lysine intermediate role is filled by Lys118. NAD(+)-binding residues include Arg139, Glu176, Lys293, and Lys317. Residues Cys411, Cys414, Cys429, and Cys435 each contribute to the Zn(2+) site. In terms of domain architecture, BRCT spans 594 to 675; sequence AGENPFKGKT…FLAIVNAYKR (82 aa).

This sequence belongs to the NAD-dependent DNA ligase family. LigA subfamily. Mg(2+) is required as a cofactor. Mn(2+) serves as cofactor.

It carries out the reaction NAD(+) + (deoxyribonucleotide)n-3'-hydroxyl + 5'-phospho-(deoxyribonucleotide)m = (deoxyribonucleotide)n+m + AMP + beta-nicotinamide D-nucleotide.. Its function is as follows. DNA ligase that catalyzes the formation of phosphodiester linkages between 5'-phosphoryl and 3'-hydroxyl groups in double-stranded DNA using NAD as a coenzyme and as the energy source for the reaction. It is essential for DNA replication and repair of damaged DNA. This Mannheimia succiniciproducens (strain KCTC 0769BP / MBEL55E) protein is DNA ligase.